A 304-amino-acid chain; its full sequence is MRLPIFLDTDPGIDDAVAIAAAIFAPELDLQLMTTVAGNVSVEKTTRNALQLLHFWNAEIPLAQGAAVPLVRAPRNAASVHGESGMAGYDFVEHNRSPLDKPAFLAIRDALMRAPEPVTLVAIGPLTNIALLLSQCPECKQYIRRLVIMGGSAGRGNCTPNAEFNIAADPEAAACVFRSGIEIVMCGLDVTNQAILTPDYLATLPELNRTGKMLHALFSHYRSGSMQSGLRMHDLCAIAWLVRPDLFTLKPCFVAVETQGEFTSGTTVVDIDGCLSKPANVQVALDLDVKGFQQWVAEVLALAS.

His233 is a catalytic residue.

The protein belongs to the IUNH family. RihC subfamily.

Functionally, hydrolyzes both purine and pyrimidine ribonucleosides with a broad-substrate specificity. This is Non-specific ribonucleoside hydrolase RihC from Escherichia coli (strain SMS-3-5 / SECEC).